A 1162-amino-acid chain; its full sequence is Paired amphipathic helix protein Sin3-like 5 (1162 aa).

The segment at 1–37 (MKRVREEVYVEPQMRGPTVSSRGETNGRPSTISGGGT) is disordered. The span at 18–30 (TVSSRGETNGRPS) shows a compositional bias: polar residues. 2 PAH domains span residues 28-109 (RPST…LPKG) and 123-193 (KPVD…LPDF). 4 disordered regions span residues 702-727 (RVSD…ESCE), 743-779 (QKLP…DDDN), 803-830 (GGQV…SNEG), and 1121-1143 (KKAT…ELSR). Ser817 bears the Phosphoserine mark. A compositionally biased stretch (polar residues) spans 1123–1139 (ATLNPTGPENVKTSDSS).

It localises to the nucleus. Acts as a transcriptional repressor. Plays roles in regulating gene expression and genome stability. This chain is Paired amphipathic helix protein Sin3-like 5 (SNL5), found in Arabidopsis thaliana (Mouse-ear cress).